The primary structure comprises 97 residues: Na(+)/H(+) antiporter subunit F1 (97 aa).

3 helical membrane passes run 3–23, 35–55, and 60–80; these read FKIF…AMLI, VVAL…FSIL, and YMLV…AVFS.

This sequence belongs to the CPA3 antiporters (TC 2.A.63) subunit F family. As to quaternary structure, may form a heterooligomeric complex that consists of seven subunits: mnhA1, mnhB1, mnhC1, mnhD1, mnhE1, mnhF1 and mnhG1.

Its subcellular location is the cell membrane. In terms of biological role, mnh complex is a Na(+)/H(+) antiporter involved in Na(+) excretion. In Staphylococcus epidermidis (strain ATCC 35984 / DSM 28319 / BCRC 17069 / CCUG 31568 / BM 3577 / RP62A), this protein is Na(+)/H(+) antiporter subunit F1 (mnhF1).